The chain runs to 115 residues: uncharacterized protein (115 aa).

This is an uncharacterized protein from Homo sapiens (Human).